The sequence spans 497 residues: Signal recognition particle subunit SRP54 2 (497 aa).

A G-domain region spans residues 1 to 297; it reads MVLAELGGRI…DAKPFVSRLL (297 aa). GTP is bound by residues 108-117, 192-196, and 250-253; these read GLQGEVLEKP, DTSGR, and TKMD. Positions 298–497 are M-domain; it reads GNGDMSGFVN…LMGMFGGRDE (200 aa).

It belongs to the GTP-binding SRP family. SRP54 subfamily. In terms of assembly, component of a signal recognition particle (SRP) complex that consists of a 7SL RNA molecule of 300 nucleotides and six protein subunits: SRP72, SRP68, SRP54, SRP19, SRP14 and SRP9.

It is found in the cytoplasm. The protein localises to the endoplasmic reticulum. The catalysed reaction is GTP + H2O = GDP + phosphate + H(+). Functionally, component of the signal recognition particle (SRP) complex, a ribonucleoprotein complex that mediates the cotranslational targeting of secretory and membrane proteins to the endoplasmic reticulum (ER). As part of the SRP complex, associates with the SRP receptor (SR) component SRPRA to target secretory proteins to the endoplasmic reticulum membrane. Binds to the signal sequence of presecretory proteins when they emerge from the ribosomes. Displays basal GTPase activity, and stimulates reciprocal GTPase activation of the SR subunit SRPRA. Forms a guanosine 5'-triphosphate (GTP)-dependent complex with the SR subunit SRPRA. SR compaction and GTPase mediated rearrangement of SR drive SRP-mediated cotranslational protein translocation into the ER. Requires the presence of SRP9/SRP14 and/or SRP19 to stably interact with RNA. The sequence is that of Signal recognition particle subunit SRP54 2 (SRP-54B) from Arabidopsis thaliana (Mouse-ear cress).